A 495-amino-acid chain; its full sequence is ATP synthase subunit beta, chloroplastic (495 aa).

Residue 172–179 (GGAGVGKT) participates in ATP binding.

The protein belongs to the ATPase alpha/beta chains family. In terms of assembly, F-type ATPases have 2 components, CF(1) - the catalytic core - and CF(0) - the membrane proton channel. CF(1) has five subunits: alpha(3), beta(3), gamma(1), delta(1), epsilon(1). CF(0) has four main subunits: a(1), b(1), b'(1) and c(9-12).

It localises to the plastid. The protein localises to the chloroplast thylakoid membrane. It carries out the reaction ATP + H2O + 4 H(+)(in) = ADP + phosphate + 5 H(+)(out). In terms of biological role, produces ATP from ADP in the presence of a proton gradient across the membrane. The catalytic sites are hosted primarily by the beta subunits. In Scilla siberica (Siberian squill), this protein is ATP synthase subunit beta, chloroplastic.